Reading from the N-terminus, the 477-residue chain is 3-isopropylmalate dehydratase large subunit (477 aa).

Cysteine 352, cysteine 413, and cysteine 416 together coordinate [4Fe-4S] cluster.

The protein belongs to the aconitase/IPM isomerase family. LeuC type 1 subfamily. In terms of assembly, heterodimer of LeuC and LeuD. [4Fe-4S] cluster is required as a cofactor.

The enzyme catalyses (2R,3S)-3-isopropylmalate = (2S)-2-isopropylmalate. It participates in amino-acid biosynthesis; L-leucine biosynthesis; L-leucine from 3-methyl-2-oxobutanoate: step 2/4. Functionally, catalyzes the isomerization between 2-isopropylmalate and 3-isopropylmalate, via the formation of 2-isopropylmaleate. In Pseudomonas putida (strain W619), this protein is 3-isopropylmalate dehydratase large subunit.